A 261-amino-acid chain; its full sequence is Cytochrome c oxidase subunit 3 (261 aa).

The Mitochondrial matrix portion of the chain corresponds to 1–15 (MTHQTHAYHMVNPSP). A helical membrane pass occupies residues 16–34 (WPLTGALSALLMTSGLAMW). Residues 35-40 (FHFNSV) lie on the Mitochondrial intermembrane side of the membrane. Residues 41 to 66 (TLLTLGLTTNMLTMYQWWRDIIREST) traverse the membrane as a helical segment. Residues 67–72 (FQGHHT) are Mitochondrial matrix-facing. The helical transmembrane segment at 73 to 105 (PTVQKGLRYGMILFIISEVLFFTGFFWAFYHSS) threads the bilayer. At 106–128 (LAPTPELGGCWPPTGISPLNPLE) the chain is on the mitochondrial intermembrane side. The chain crosses the membrane as a helical span at residues 129 to 152 (VPLLNTSVLLASGVSITWAHHSLM). At 153 to 155 (EGN) the chain is on the mitochondrial matrix side. Residues 156 to 183 (RNHMLQALFITIALGVYFTLLQASEYYE) traverse the membrane as a helical segment. Residues 184–190 (APFTISD) are Mitochondrial intermembrane-facing. Residues 191–223 (GIYGSTFFVATGFHGLHVIIGSTFLIVCFFRQL) form a helical membrane-spanning segment. At 224-232 (KFHFTSNHH) the chain is on the mitochondrial matrix side. Residues 233 to 256 (FGFEAAAWYWHFVDVVWLFLYVSI) traverse the membrane as a helical segment. The Mitochondrial intermembrane segment spans residues 257 to 261 (YWWGS).

This sequence belongs to the cytochrome c oxidase subunit 3 family. In terms of assembly, component of the cytochrome c oxidase (complex IV, CIV), a multisubunit enzyme composed of 14 subunits. The complex is composed of a catalytic core of 3 subunits MT-CO1, MT-CO2 and MT-CO3, encoded in the mitochondrial DNA, and 11 supernumerary subunits COX4I, COX5A, COX5B, COX6A, COX6B, COX6C, COX7A, COX7B, COX7C, COX8 and NDUFA4, which are encoded in the nuclear genome. The complex exists as a monomer or a dimer and forms supercomplexes (SCs) in the inner mitochondrial membrane with NADH-ubiquinone oxidoreductase (complex I, CI) and ubiquinol-cytochrome c oxidoreductase (cytochrome b-c1 complex, complex III, CIII), resulting in different assemblies (supercomplex SCI(1)III(2)IV(1) and megacomplex MCI(2)III(2)IV(2)).

The protein localises to the mitochondrion inner membrane. It carries out the reaction 4 Fe(II)-[cytochrome c] + O2 + 8 H(+)(in) = 4 Fe(III)-[cytochrome c] + 2 H2O + 4 H(+)(out). In terms of biological role, component of the cytochrome c oxidase, the last enzyme in the mitochondrial electron transport chain which drives oxidative phosphorylation. The respiratory chain contains 3 multisubunit complexes succinate dehydrogenase (complex II, CII), ubiquinol-cytochrome c oxidoreductase (cytochrome b-c1 complex, complex III, CIII) and cytochrome c oxidase (complex IV, CIV), that cooperate to transfer electrons derived from NADH and succinate to molecular oxygen, creating an electrochemical gradient over the inner membrane that drives transmembrane transport and the ATP synthase. Cytochrome c oxidase is the component of the respiratory chain that catalyzes the reduction of oxygen to water. Electrons originating from reduced cytochrome c in the intermembrane space (IMS) are transferred via the dinuclear copper A center (CU(A)) of subunit 2 and heme A of subunit 1 to the active site in subunit 1, a binuclear center (BNC) formed by heme A3 and copper B (CU(B)). The BNC reduces molecular oxygen to 2 water molecules using 4 electrons from cytochrome c in the IMS and 4 protons from the mitochondrial matrix. The polypeptide is Cytochrome c oxidase subunit 3 (MT-CO3) (Neotragus moschatus (Suni)).